A 160-amino-acid chain; its full sequence is Cytochrome b6-f complex subunit 4 (160 aa).

The next 3 membrane-spanning stretches (helical) occupy residues 36–56, 95–115, and 131–151; these read LLYI…GLAV, LLGI…PFIE, and AVFL…TLPI.

This sequence belongs to the cytochrome b family. PetD subfamily. The 4 large subunits of the cytochrome b6-f complex are cytochrome b6, subunit IV (17 kDa polypeptide, PetD), cytochrome f and the Rieske protein, while the 4 small subunits are PetG, PetL, PetM and PetN. The complex functions as a dimer.

Its subcellular location is the cellular thylakoid membrane. In terms of biological role, component of the cytochrome b6-f complex, which mediates electron transfer between photosystem II (PSII) and photosystem I (PSI), cyclic electron flow around PSI, and state transitions. The chain is Cytochrome b6-f complex subunit 4 from Trichodesmium erythraeum (strain IMS101).